The chain runs to 240 residues: Octanoyltransferase (240 aa).

The 185-residue stretch at 49–233 folds into the BPL/LPL catalytic domain; the sequence is HQAEELVWLL…AFESVFGATR (185 aa). Residues 87 to 94, 162 to 164, and 175 to 177 contribute to the substrate site; these read RGGQVTYH, AIG, and GIA. The active-site Acyl-thioester intermediate is C193.

The protein belongs to the LipB family.

The protein localises to the cytoplasm. The catalysed reaction is octanoyl-[ACP] + L-lysyl-[protein] = N(6)-octanoyl-L-lysyl-[protein] + holo-[ACP] + H(+). It functions in the pathway protein modification; protein lipoylation via endogenous pathway; protein N(6)-(lipoyl)lysine from octanoyl-[acyl-carrier-protein]: step 1/2. In terms of biological role, catalyzes the transfer of endogenously produced octanoic acid from octanoyl-acyl-carrier-protein onto the lipoyl domains of lipoate-dependent enzymes. Lipoyl-ACP can also act as a substrate although octanoyl-ACP is likely to be the physiological substrate. The sequence is that of Octanoyltransferase from Bradyrhizobium sp. (strain ORS 278).